Reading from the N-terminus, the 780-residue chain is Tyrosine-protein phosphatase non-receptor type 12 (780 aa).

Met1 is modified (N-acetylmethionine). At Ser19 the chain carries Phosphoserine. The region spanning 28–293 is the Tyrosine-protein phosphatase domain; it reads FARDFMRLRR…ELVHRAIAQL (266 aa). Substrate is bound by residues Arg36, 63–67, Asp199, 231–237, and Gln278; these read RYKDI and CSAGCGR. The active-site Phosphocysteine intermediate is the Cys231. Residues Ser332, Ser435, Ser449, and Ser468 each carry the phosphoserine modification. Residues 345–438 are interaction with TGFB1I1; it reads VEGDAKEEIL…KLERNLSFEI (94 aa). A compositionally biased stretch (polar residues) spans 502–519; that stretch reads QSNKVSVTPPEESQNSDT. Disordered regions lie at residues 502-639, 657-725, and 744-780; these read QSNK…STES, GTTH…EKCD, and SDKR…SEWT. 2 positions are modified to phosphothreonine: Thr509 and Thr519. Residues 521–533 show a composition bias toward basic and acidic residues; it reads PRPDRLPLDEKGH. 2 stretches are compositionally biased toward polar residues: residues 552–577 and 587–601; these read EGNS…TQVE and TSPL…TNPL. Position 567 is a phosphoserine (Ser567). Thr569 bears the Phosphothreonine mark. Phosphoserine occurs at positions 571 and 596. Thr598 is modified (phosphothreonine). Basic and acidic residues predominate over residues 602 to 613; sequence HSDDSDSDERNS. Residues Ser603, Ser606, Ser608, and Ser613 each carry the phosphoserine modification. Residues 622-639 are compositionally biased toward low complexity; the sequence is TNISTASATVSAATSTES. 2 positions are modified to phosphoserine: Ser673 and Ser689. Over residues 690–703 the composition is skewed to polar residues; the sequence is EHNTPVRSEWSELQ. Thr693 bears the Phosphothreonine mark. Basic and acidic residues-rich tracts occupy residues 704–725 and 771–780; these read SQER…EKCD and GPRDPPSEWT.

The protein belongs to the protein-tyrosine phosphatase family. Non-receptor class 4 subfamily. As to quaternary structure, interacts with TGFB1I1. Interacts with PSTPIP1. Interacts with PTK2B/PYK2. Interacts with LPXN. Interacts with SORBS2; this interaction greatly enhances WASF1 dephosphorylation and might mediate partial translocation to focal adhesion sites. In terms of processing, phosphorylated by STK24/MST3 and this results in inhibition of its activity.

The protein resides in the cytoplasm. It is found in the cell junction. It localises to the focal adhesion. The protein localises to the cell projection. Its subcellular location is the podosome. The enzyme catalyses O-phospho-L-tyrosyl-[protein] + H2O = L-tyrosyl-[protein] + phosphate. In terms of biological role, dephosphorylates a range of proteins, and thereby regulates cellular signaling cascades. Dephosphorylates cellular tyrosine kinases, such as ERBB2 and PTK2B/PYK2, and thereby regulates signaling via ERBB2 and PTK2B/PYK2. Selectively dephosphorylates ERBB2 phosphorylated at 'Tyr-1112', 'Tyr-1196', and/or 'Tyr-1248'. The chain is Tyrosine-protein phosphatase non-receptor type 12 (PTPN12) from Homo sapiens (Human).